The chain runs to 1271 residues: MDRGAAAAQGTAPPQDGEQPAESPEPPPPWPPPPPPPAPPPAPPLLSEASPEPIPEPCPELAPGPCPEATSESATELYTEPTPEPATEPASEPAPEPATEPAPEPATEPAPEPAPEPATESAPEPTPEPALESVPEPAPELTPEVAPELAPEPTPEPVTELAPEFCPEAAPEFRPSPAPCLLQCPVDTRERGLKTSPSPSPSPSPRTPMSWSRIKKILKEGPMLKNCNSFKRWKLRYFLVQGQKLYFAHHPAFAHFETIDLSQATVAESSCRNLCHSFCVITPQRKITLAAPNRKDMEEWINIIKTIQQGEIYKIPAAENNPFLVGMHCWYSSYSHRTQHCNVCRESIPALSRDAIICEVCKVKSHRLCALRASKDCKWNTLSITDDLLLPADEVNMPHQWVEGNMPVSSQCAVCHESCGSYQRLQDFRCLWCNSTVHDDCRRRFSKECCFRSHRSSVIPPTALSDPKGDGQLVVSSDFWNLDWSSACSCPLLIFINSKSGDHQGIVFLRKFKQYLNPSQVFDLLKGGPEAGLSMFKNFARFRILVCGGDGSVSWVLSLIDAFGLHEKCQLAVIPLGTGNDLARVLGWGAFWNKSKSPLDILNRVEQASVRILDRWSVMIRETPRQTPLLKGQVEMDVPRFEAAAIQHLESAATELNKILKAKYPTEMIIATRFLCSAVEDFVVDIVKAWGQIKQNNTAIVSVILKSDLMYDRLSVLIDVLAEEAAATSAEKSATEYADSSKADRKPFIPQIDHIAKCKLELATKAQSLQKSLKLIIFQVEQALDEESRQTISVKNFSSTFFLEDDPEDINQTSPRRRSRRGTLSSISSLKSEDLDNLNLDHLHFTPESIRFKEKCVMNNYFGIGLDAKISLDFNTRRDEHPGQYNSRLKNKMWYGLLGTKELLQRSYRKLEERVHLECDGETISLPNLQGIVVLNITSYAGGINFWGSNTATTEYEAPAIDDGKLEVVAIFGSVQMAMSRIINLHHHRIAQCHEVMITIDGEEGIPVQVDGEAWIQRPGLIKIRYKNAAQMLTRDRDFENSMKMWEYKHTEIQAAPQPQLDFQDSQESLSDEEYAQMQHLARLAENLISKLNDLSKIHQHVSVLMGSVNASANILNDIFYGQDSGNEMGAASCIPIETLSRNDAVDVTFSLKGLYDDTTAFLDEKLLRSAEDETALQSALDAMNKEFKKLSEIDWMNPIFVPEEKSSDTDSRSLRLKIKFPKLGKKKVEEERKPKSGQSVQSFIGNLWHRRHREDEAEGDDPLTPSRSQL.

Positions 1 to 15 (MDRGAAAAQGTAPPQ) are enriched in low complexity. The interval 1–160 (MDRGAAAAQG…PEPTPEPVTE (160 aa)) is disordered. The segment covering 23–44 (SPEPPPPWPPPPPPPAPPPAPP) has biased composition (pro residues). 33 tandem repeats follow at residues 48–51 (EASP), 52–55 (EPIP), 56–59 (EPCP), 60–63 (ELAP), 64–67 (GPCP), 68–71 (EATS), 72–75 (ESAT), 76–79 (ELYT), 80–83 (EPTP), 84–87 (EPAT), 88–91 (EPAS), 92–95 (EPAP), 96–99 (EPAT), 100–103 (EPAP), 104–107 (EPAT), 108–111 (EPAP), 112–115 (EPAP), 116–119 (EPAT), 120–123 (ESAP), 124–127 (EPTP), 128–131 (EPAL), 132–135 (ESVP), 136–139 (EPAP), 140–143 (ELTP), 144–147 (EVAP), 148–151 (ELAP), 152–155 (EPTP), 156–159 (EPVT), 160–163 (ELAP), 164–167 (EFCP), 168–171 (EAAP), 172–175 (EFRP), and 176–179 (SPAP). The segment at 48 to 179 (EASPEPIPEP…APEFRPSPAP (132 aa)) is 33 X 4 AA approximate tandem repeats of E-P-A-P. Residues 52-66 (EPIPEPCPELAPGPC) show a composition bias toward pro residues. Position 78 is a phosphotyrosine (Tyr78). Residues 82–116 (TPEPATEPASEPAPEPATEPAPEPATEPAPEPAPE) are compositionally biased toward pro residues. Residues 139–149 (PELTPEVAPEL) show a composition bias toward low complexity. A disordered region spans residues 190-209 (ERGLKTSPSPSPSPSPRTPM). The 94-residue stretch at 216–309 (KILKEGPMLK…WINIIKTIQQ (94 aa)) folds into the PH domain. 2 Phorbol-ester/DAG-type zinc fingers span residues 327-377 (MHCW…SKDC) and 398-449 (PHQW…SKEC). One can recognise a DAGKc domain in the interval 487–622 (ACSCPLLIFI…LDRWSVMIRE (136 aa)). Disordered regions lie at residues 805 to 825 (DDPEDINQTSPRRRSRRGTLS) and 1252 to 1271 (RHREDEAEGDDPLTPSRSQL). The segment at 1199-1268 (PIFVPEEKSS…EGDDPLTPSR (70 aa)) is required for localization to the plasma membrane.

It belongs to the eukaryotic diacylglycerol kinase family. In terms of assembly, does not form homooligomers. In terms of processing, phosphorylated at Tyr-78 by some member of the SRC family in response to H(2)O(2). In terms of tissue distribution, expressed in testis, and to a lesser extent in placenta.

The protein localises to the cell membrane. It catalyses the reaction a 1,2-diacyl-sn-glycerol + ATP = a 1,2-diacyl-sn-glycero-3-phosphate + ADP + H(+). The enzyme catalyses 1,2-di-(9Z-octadecenoyl)-sn-glycerol + ATP = 1,2-di-(9Z-octadecenoyl)-sn-glycero-3-phosphate + ADP + H(+). Its pathway is lipid metabolism; glycerolipid metabolism. Its activity is regulated as follows. Inhibited in response to H(2)O(2). Diacylglycerol kinase that converts diacylglycerol/DAG into phosphatidic acid/phosphatidate/PA and regulates the respective levels of these two bioactive lipids. Thereby, acts as a central switch between the signaling pathways activated by these second messengers with different cellular targets and opposite effects in numerous biological processes. This is Diacylglycerol kinase kappa from Homo sapiens (Human).